Consider the following 236-residue polypeptide: UPF0502 protein Bcen2424_5610 (236 aa).

The protein belongs to the UPF0502 family.

In Burkholderia cenocepacia (strain HI2424), this protein is UPF0502 protein Bcen2424_5610.